Here is a 197-residue protein sequence, read N- to C-terminus: Nucleoside triphosphate pyrophosphatase (197 aa).

The Proton acceptor role is filled by Asp-71.

Belongs to the Maf family. A divalent metal cation serves as cofactor.

Its subcellular location is the cytoplasm. It catalyses the reaction a ribonucleoside 5'-triphosphate + H2O = a ribonucleoside 5'-phosphate + diphosphate + H(+). The enzyme catalyses a 2'-deoxyribonucleoside 5'-triphosphate + H2O = a 2'-deoxyribonucleoside 5'-phosphate + diphosphate + H(+). In terms of biological role, nucleoside triphosphate pyrophosphatase. May have a dual role in cell division arrest and in preventing the incorporation of modified nucleotides into cellular nucleic acids. The sequence is that of Nucleoside triphosphate pyrophosphatase from Synechococcus sp. (strain JA-3-3Ab) (Cyanobacteria bacterium Yellowstone A-Prime).